The chain runs to 417 residues: Brevican core protein (417 aa).

A signal peptide spans methionine 1–alanine 22. The Ig-like V-type domain occupies aspartate 23–lysine 155. Intrachain disulfides connect cysteine 57–cysteine 137, cysteine 179–cysteine 250, and cysteine 203–cysteine 224. The N-linked (GlcNAc...) asparagine glycan is linked to asparagine 130. Link domains lie at valine 157–alanine 252 and glycine 257–arginine 354. Asparagine 267 carries an N-linked (GlcNAc...) asparagine glycan. 2 cysteine pairs are disulfide-bonded: cysteine 277–cysteine 352 and cysteine 301–cysteine 322. A glycan (N-linked (GlcNAc...) asparagine) is linked at asparagine 337.

This sequence belongs to the aggrecan/versican proteoglycan family. As to expression, central nervous system.

It is found in the secreted. Its subcellular location is the extracellular space. The protein resides in the extracellular matrix. In terms of biological role, may play a role in the terminally differentiating and the adult nervous system during postnatal development. Could stabilize interactions between hyaluronan (HA) and brain proteoglycans. This chain is Brevican core protein (BCAN), found in Felis catus (Cat).